The following is a 120-amino-acid chain: Fumarate reductase subunit D (120 aa).

3 helical membrane-spanning segments follow: residues 25-45, 57-77, and 100-120; these read FAML…LGIL, GFVT…LPMW, and IACY…VFMI.

It belongs to the FrdD family. Part of an enzyme complex containing four subunits: a flavoprotein (FrdA), an iron-sulfur protein (FrdB), and two hydrophobic anchor proteins (FrdC and FrdD).

The protein resides in the cell inner membrane. In terms of biological role, anchors the catalytic components of the fumarate reductase complex to the cell membrane, binds quinones. The chain is Fumarate reductase subunit D from Photobacterium profundum (strain SS9).